The chain runs to 271 residues: 4-hydroxy-tetrahydrodipicolinate reductase (271 aa).

NAD(+)-binding positions include 11-16 and Glu-37; that span reads GGSGRM. Arg-38 serves as a coordination point for NADP(+). NAD(+)-binding positions include 101–103 and 125–128; these read GTT and APNM. The active-site Proton donor/acceptor is His-158. Position 159 (His-159) interacts with (S)-2,3,4,5-tetrahydrodipicolinate. The active-site Proton donor is Lys-162. Residue 168-169 participates in (S)-2,3,4,5-tetrahydrodipicolinate binding; the sequence is GT.

It belongs to the DapB family.

It is found in the cytoplasm. It carries out the reaction (S)-2,3,4,5-tetrahydrodipicolinate + NAD(+) + H2O = (2S,4S)-4-hydroxy-2,3,4,5-tetrahydrodipicolinate + NADH + H(+). The catalysed reaction is (S)-2,3,4,5-tetrahydrodipicolinate + NADP(+) + H2O = (2S,4S)-4-hydroxy-2,3,4,5-tetrahydrodipicolinate + NADPH + H(+). The protein operates within amino-acid biosynthesis; L-lysine biosynthesis via DAP pathway; (S)-tetrahydrodipicolinate from L-aspartate: step 4/4. In terms of biological role, catalyzes the conversion of 4-hydroxy-tetrahydrodipicolinate (HTPA) to tetrahydrodipicolinate. The chain is 4-hydroxy-tetrahydrodipicolinate reductase from Shewanella halifaxensis (strain HAW-EB4).